The following is a 180-amino-acid chain: uncharacterized protein (180 aa).

Its subcellular location is the mitochondrion. This is an uncharacterized protein from Marchantia polymorpha (Common liverwort).